The chain runs to 258 residues: UPF0246 protein YaaA (258 aa).

This sequence belongs to the UPF0246 family.

The sequence is that of UPF0246 protein YaaA from Escherichia coli O157:H7.